We begin with the raw amino-acid sequence, 219 residues long: MNDRGVPNSRTGPSLLALLPAANSYAAAYSPANRRAVGVGGGSYKSPTRGSPGTRGGWKAPLCLTLIGGIDGTVAALPPPAVYSLTFSGLGEPPQGAPRRGGGGADAGERTERGSTANKKKRQRGVLSPPSALGSSPAGRGRPAPAIAAAKSSPLSASAAPGRCGARPRAPSRATRERRPRGNPRAPLRRGARGRRRSHTRGPARTTVGAVEPRAGLCE.

The first 26 residues, 1 to 26, serve as a signal peptide directing secretion; sequence MNDRGVPNSRTGPSLLALLPAANSYA. Disordered stretches follow at residues 36-57 and 88-219; these read AVGV…TRGG and SGLG…GLCE. A compositionally biased stretch (low complexity) spans 127–173; sequence LSPPSALGSSPAGRGRPAPAIAAAKSSPLSASAAPGRCGARPRAPSR. Residues 176-202 show a composition bias toward basic residues; it reads RERRPRGNPRAPLRRGARGRRRSHTRG.

This is an uncharacterized protein from Gallid herpesvirus 2 (strain Chicken/Md5/ATCC VR-987) (GaHV-2).